Here is a 1215-residue protein sequence, read N- to C-terminus: Kinesin-like protein KIN-7I (1215 aa).

Positions Arg-3–Val-327 constitute a Kinesin motor domain. Gly-79 to Thr-86 provides a ligand contact to ATP. Coiled coils occupy residues Val-333–Leu-414, Glu-571–Glu-646, Ile-708–Ser-855, and Asp-894–Met-979.

Belongs to the TRAFAC class myosin-kinesin ATPase superfamily. Kinesin family. KIN-7 subfamily.

The polypeptide is Kinesin-like protein KIN-7I (Oryza sativa subsp. japonica (Rice)).